Consider the following 490-residue polypeptide: Cytochrome P450 2C7 (490 aa).

R144 is subject to Dimethylated arginine. C435 provides a ligand contact to heme.

Belongs to the cytochrome P450 family. Heme serves as cofactor.

Its subcellular location is the endoplasmic reticulum membrane. The protein resides in the microsome membrane. It catalyses the reaction an organic molecule + reduced [NADPH--hemoprotein reductase] + O2 = an alcohol + oxidized [NADPH--hemoprotein reductase] + H2O + H(+). Its function is as follows. Cytochromes P450 are a group of heme-thiolate monooxygenases. In liver microsomes, this enzyme is involved in an NADPH-dependent electron transport pathway. It oxidizes a variety of structurally unrelated compounds, including steroids, fatty acids, and xenobiotics. The chain is Cytochrome P450 2C7 (Cyp2c7) from Rattus norvegicus (Rat).